A 307-amino-acid polypeptide reads, in one-letter code: Methionyl-tRNA formyltransferase (307 aa).

108 to 111 (SLLP) serves as a coordination point for (6S)-5,6,7,8-tetrahydrofolate.

The protein belongs to the Fmt family.

The catalysed reaction is L-methionyl-tRNA(fMet) + (6R)-10-formyltetrahydrofolate = N-formyl-L-methionyl-tRNA(fMet) + (6S)-5,6,7,8-tetrahydrofolate + H(+). In terms of biological role, attaches a formyl group to the free amino group of methionyl-tRNA(fMet). The formyl group appears to play a dual role in the initiator identity of N-formylmethionyl-tRNA by promoting its recognition by IF2 and preventing the misappropriation of this tRNA by the elongation apparatus. The sequence is that of Methionyl-tRNA formyltransferase from Xanthomonas axonopodis pv. citri (strain 306).